A 482-amino-acid polypeptide reads, in one-letter code: 2-succinylbenzoate--CoA ligase (482 aa).

This sequence belongs to the ATP-dependent AMP-binding enzyme family. MenE subfamily.

It catalyses the reaction 2-succinylbenzoate + ATP + CoA = 2-succinylbenzoyl-CoA + AMP + diphosphate. It participates in quinol/quinone metabolism; 1,4-dihydroxy-2-naphthoate biosynthesis; 1,4-dihydroxy-2-naphthoate from chorismate: step 5/7. The protein operates within quinol/quinone metabolism; menaquinone biosynthesis. In terms of biological role, converts 2-succinylbenzoate (OSB) to 2-succinylbenzoyl-CoA (OSB-CoA). This is 2-succinylbenzoate--CoA ligase from Bacillus cereus (strain ATCC 14579 / DSM 31 / CCUG 7414 / JCM 2152 / NBRC 15305 / NCIMB 9373 / NCTC 2599 / NRRL B-3711).